The sequence spans 245 residues: DNA repair protein RecO (245 aa).

It belongs to the RecO family.

Involved in DNA repair and RecF pathway recombination. In Klebsiella pneumoniae subsp. pneumoniae (strain ATCC 700721 / MGH 78578), this protein is DNA repair protein RecO.